The chain runs to 317 residues: Transaldolase (317 aa).

The Schiff-base intermediate with substrate role is filled by Lys-132.

It belongs to the transaldolase family. Type 1 subfamily.

The protein resides in the cytoplasm. The enzyme catalyses D-sedoheptulose 7-phosphate + D-glyceraldehyde 3-phosphate = D-erythrose 4-phosphate + beta-D-fructose 6-phosphate. It participates in carbohydrate degradation; pentose phosphate pathway; D-glyceraldehyde 3-phosphate and beta-D-fructose 6-phosphate from D-ribose 5-phosphate and D-xylulose 5-phosphate (non-oxidative stage): step 2/3. In terms of biological role, transaldolase is important for the balance of metabolites in the pentose-phosphate pathway. The protein is Transaldolase of Haemophilus influenzae (strain ATCC 51907 / DSM 11121 / KW20 / Rd).